We begin with the raw amino-acid sequence, 1038 residues long: Translation initiation factor IF-2 (1038 aa).

Residues 32-442 (GSALASLSDE…RKGVNTAAPR (411 aa)) form a disordered region. Composition is skewed to low complexity over residues 65–77 (PPTK…PVAP), 100–113 (PAEA…PAQP), and 131–147 (PKLA…APAA). Basic and acidic residues-rich tracts occupy residues 204–217 (SGGR…KRES) and 275–295 (RSLD…DAGK). A compositionally biased stretch (low complexity) spans 311 to 328 (PSAPAKPAAPTGSSGPAA). A compositionally biased stretch (basic and acidic residues) spans 331-344 (PDIKLTRDVIEGHK). A compositionally biased stretch (basic residues) spans 422 to 435 (HHYRRSRPRIRRKG). The tr-type G domain occupies 529–696 (ARPPVVTFLG…TLLTIAELNE (168 aa)). The interval 538 to 545 (GHVDHGKT) is G1. GTP is bound at residue 538-545 (GHVDHGKT). The tract at residues 563–567 (GITQH) is G2. Residues 584 to 587 (DTPG) are G3. Residues 584 to 588 (DTPGH) and 638 to 641 (NKID) each bind GTP. The G4 stretch occupies residues 638 to 641 (NKID). The G5 stretch occupies residues 674-676 (SAT).

It belongs to the TRAFAC class translation factor GTPase superfamily. Classic translation factor GTPase family. IF-2 subfamily.

The protein resides in the cytoplasm. Functionally, one of the essential components for the initiation of protein synthesis. Protects formylmethionyl-tRNA from spontaneous hydrolysis and promotes its binding to the 30S ribosomal subunits. Also involved in the hydrolysis of GTP during the formation of the 70S ribosomal complex. This Rhodopirellula baltica (strain DSM 10527 / NCIMB 13988 / SH1) protein is Translation initiation factor IF-2.